The chain runs to 277 residues: NH(3)-dependent NAD(+) synthetase (277 aa).

ATP is bound at residue glycine 36–serine 43. Aspartate 42 is a Mg(2+) binding site. Residue arginine 118 coordinates deamido-NAD(+). Threonine 138 contributes to the ATP binding site. Glutamate 143 lines the Mg(2+) pocket. Residues lysine 167 and serine 189 each contribute to the ATP site.

This sequence belongs to the NAD synthetase family. In terms of assembly, homodimer.

It catalyses the reaction deamido-NAD(+) + NH4(+) + ATP = AMP + diphosphate + NAD(+) + H(+). The protein operates within cofactor biosynthesis; NAD(+) biosynthesis; NAD(+) from deamido-NAD(+) (ammonia route): step 1/1. Its function is as follows. Catalyzes the ATP-dependent amidation of deamido-NAD to form NAD. Uses ammonia as a nitrogen source. The chain is NH(3)-dependent NAD(+) synthetase from Chlorobaculum parvum (strain DSM 263 / NCIMB 8327) (Chlorobium vibrioforme subsp. thiosulfatophilum).